We begin with the raw amino-acid sequence, 219 residues long: Octanoyltransferase (219 aa).

The BPL/LPL catalytic domain maps to 32 to 207 (SSSPDQLWIV…TFSHNLGYQN (176 aa)). Substrate-binding positions include 71-78 (RGGQVTYH), 138-140 (SLG), and 151-153 (GLA). The active-site Acyl-thioester intermediate is Cys-169.

The protein belongs to the LipB family.

The protein resides in the cytoplasm. The enzyme catalyses octanoyl-[ACP] + L-lysyl-[protein] = N(6)-octanoyl-L-lysyl-[protein] + holo-[ACP] + H(+). Its pathway is protein modification; protein lipoylation via endogenous pathway; protein N(6)-(lipoyl)lysine from octanoyl-[acyl-carrier-protein]: step 1/2. Catalyzes the transfer of endogenously produced octanoic acid from octanoyl-acyl-carrier-protein onto the lipoyl domains of lipoate-dependent enzymes. Lipoyl-ACP can also act as a substrate although octanoyl-ACP is likely to be the physiological substrate. The sequence is that of Octanoyltransferase from Shewanella woodyi (strain ATCC 51908 / MS32).